The chain runs to 561 residues: Potassium-transporting ATPase potassium-binding subunit (561 aa).

A run of 10 helical transmembrane segments spans residues 4-24 (IVMQDAFFVVLLLVLAVPLGI), 65-85 (AVSVLAFSAVGFVFVMAVLML), 133-153 (IGLTVQNFVSAATGIAVLFAV), 177-197 (LYILLPLSLILALLLVSQGVV), 253-273 (FTNLIEMLAILLIPVALVVMF), 285-305 (AIMTAMMIVFVIGVVAITISE), 380-400 (GLYGMIGFIILTVFIAGLLVG), 417-437 (MVCLLILVPPLLTLFGTAVAV), 484-504 (MVGAVMMLLARFIPLVAALYL), and 528-548 (FIGLLIGVVVLVGALSFLPAL).

This sequence belongs to the KdpA family. In terms of assembly, the system is composed of three essential subunits: KdpA, KdpB and KdpC.

It localises to the cell membrane. Its function is as follows. Part of the high-affinity ATP-driven potassium transport (or Kdp) system, which catalyzes the hydrolysis of ATP coupled with the electrogenic transport of potassium into the cytoplasm. This subunit binds the extracellular potassium ions and delivers the ions to the membrane domain of KdpB through an intramembrane tunnel. The chain is Potassium-transporting ATPase potassium-binding subunit from Listeria monocytogenes serotype 4b (strain F2365).